Consider the following 1178-residue polypeptide: Leucine--tRNA ligase, cytoplasmic (1178 aa).

Residues Y54 and Y56 each coordinate L-leucine. The 'HIGH' region motif lies at 62 to 65 (HLGH). The residue at position 169 (S169) is a Phosphoserine. Residues 262-511 (GPQEYTLVKL…DAGDALIYME (250 aa)) form an editing domain region. L-leucine is bound by residues L596 and S599. The 'KMSKS' region motif lies at 718-722 (KMSKS). K721 provides a ligand contact to ATP. Residue S722 is modified to Phosphoserine. Residues K972 and K1049 each carry the N6-acetyllysine modification.

This sequence belongs to the class-I aminoacyl-tRNA synthetase family.

It is found in the cytoplasm. The enzyme catalyses tRNA(Leu) + L-leucine + ATP = L-leucyl-tRNA(Leu) + AMP + diphosphate. The catalysed reaction is L-methionyl-tRNA(Leu) + H2O = tRNA(Leu) + L-methionine + H(+). With respect to regulation, 5-fluoro-1,3-dihydro-1-hydroxy-1,2-benzoxaborole inhibits LARS1 by forming a covalent adduct with the 3' adenosine of tRNA(Leu) at the editing site, thus locking the enzyme in an inactive conformation. Its function is as follows. Aminoacyl-tRNA synthetase that catalyzes the specific attachment of leucine to its cognate tRNA (tRNA(Leu)). It performs tRNA aminoacylation in a two-step reaction: Leu is initially activated by ATP to form a leucyl-adenylate (Leu-AMP) intermediate; then the leucyl moiety is transferred to the acceptor 3' end of the tRNA to yield leucyl-tRNA. To improve the fidelity of catalytic reactions, it is also able to hydrolyze misactivated aminoacyl-adenylate intermediates (pre-transfer editing) and mischarged aminoacyl-tRNAs (post-transfer editing). In Mus musculus (Mouse), this protein is Leucine--tRNA ligase, cytoplasmic (Lars1).